A 505-amino-acid chain; its full sequence is Maturase K (505 aa).

This sequence belongs to the intron maturase 2 family. MatK subfamily.

It is found in the plastid. Its subcellular location is the chloroplast. Functionally, usually encoded in the trnK tRNA gene intron. Probably assists in splicing its own and other chloroplast group II introns. The chain is Maturase K from Rosa stellata (Star rose).